The following is a 485-amino-acid chain: UDP-N-acetylmuramate--L-alanine ligase (485 aa).

129 to 135 (GTHGKTT) provides a ligand contact to ATP.

This sequence belongs to the MurCDEF family.

The protein resides in the cytoplasm. It carries out the reaction UDP-N-acetyl-alpha-D-muramate + L-alanine + ATP = UDP-N-acetyl-alpha-D-muramoyl-L-alanine + ADP + phosphate + H(+). Its pathway is cell wall biogenesis; peptidoglycan biosynthesis. Cell wall formation. The protein is UDP-N-acetylmuramate--L-alanine ligase of Vibrio campbellii (strain ATCC BAA-1116).